A 101-amino-acid chain; its full sequence is Chaperone modulatory protein CbpM (101 aa).

The protein belongs to the CbpM family.

Functionally, interacts with CbpA and inhibits both the DnaJ-like co-chaperone activity and the DNA binding activity of CbpA. Together with CbpA, modulates the activity of the DnaK chaperone system. Does not inhibit the co-chaperone activity of DnaJ. The chain is Chaperone modulatory protein CbpM from Pseudomonas putida (strain ATCC 47054 / DSM 6125 / CFBP 8728 / NCIMB 11950 / KT2440).